Reading from the N-terminus, the 77-residue chain is Small nuclear ribonucleoprotein G (77 aa).

Residues 2–77 (VSTPELKKYM…IISLEALDAI (76 aa)) enclose the Sm domain.

The protein belongs to the snRNP Sm proteins family. Component of the Sm core complex, present in spliceosomal snRNP U1, U2, U4/U6 and U5. The core complex contains SMB1, SMD1, SMD2, SMD3, SME1, SMX3 and SMX2 (Sm proteins B, D1, D2, D3, E, F and G, respectively), and is probably a heptameric ring structure. SMX2 specifically interacts with SME1. Belongs to the CWC complex (or CEF1-associated complex), a spliceosome sub-complex reminiscent of a late-stage spliceosome composed of the U2, U5 and U6 snRNAs and at least BUD13, BUD31, BRR2, CDC40, CEF1, CLF1, CUS1, CWC2, CWC15, CWC21, CWC22, CWC23, CWC24, CWC25, CWC27, ECM2, HSH155, IST3, ISY1, LEA1, MSL1, NTC20, PRP8, PRP9, PRP11, PRP19, PRP21, PRP22, PRP45, PRP46, SLU7, SMB1, SMD1, SMD2, SMD3, SMX2, SMX3, SNT309, SNU114, SPP2, SYF1, SYF2, RSE1 and YJU2. Component of the U4/U6-U5 tri-snRNP complex composed of the U4, U6 and U5 snRNAs and at least PRP3, PRP4, PRP6, PRP8, PRP18, PRP31, PRP38, SNU13, SNU23, SNU66, SNU114, SPP381, SMB1, SMD1, SMD2, SMD3, SMX2, SMX3, LSM2, LSM3, LSM4, LSM5, LSM6, LSM7, LSM8, BRR2 and DIB1.

The protein localises to the nucleus. It localises to the cytoplasm. In terms of biological role, plays a role in pre-mRNA splicing as a core component of the spliceosomal U1, U2, U4 and U5 small nuclear ribonucleoproteins (snRNPs), the building blocks of the spliceosome. The sequence is that of Small nuclear ribonucleoprotein G (SMX2) from Saccharomyces cerevisiae (strain ATCC 204508 / S288c) (Baker's yeast).